A 2116-amino-acid chain; its full sequence is Unconventional myosin-VIIb (2116 aa).

Positions 65–760 (QGVDDMIRLG…QDTLLEVQRS (696 aa)) constitute a Myosin motor domain. An ATP-binding site is contributed by 158 to 165 (GESGAGKT). The segment at 637 to 659 (LDQLMKILTNCQPYFIRCIKPNE) is actin-binding. IQ domains follow at residues 745-765 (IFLRDHQDTLLEVQRSQVLDR), 763-792 (LDRAALSIQKVLRGYRYRKEFLRQRRAAVT), 786-815 (QRRAAVTLQAWWRGYCNRRNFKLILVGFER), 814-834 (ERLQAIARSQPLARQYQAMRQ), 832-861 (MRQRTVQLQALCRGYLVRQQVQAKRRAVVV), and 855-884 (KRRAVVVIQAHARGMAARRNFQQRKANAPL). S904 carries the phosphoserine modification. The tract at residues 916–1542 (EKVFGFLPAM…KKQGLLASEN (627 aa)) is mediates interaction with ANKS4B. The 204-residue stretch at 989-1192 (HIRRPLRYPL…PTWLELQAVK (204 aa)) folds into the MyTH4 1 domain. Residues 1197–1506 (IPIQVILATG…EGLKERSIFA (310 aa)) form the FERM 1 domain. S1371 is subject to Phosphoserine. In terms of domain architecture, SH3 spans 1501-1567 (ERSIFAMALQ…PMACLYTIPT (67 aa)). The segment at 1501 to 2116 (ERSIFAMALQ…GSKAPALAST (616 aa)) is mediates interaction with CDHR2, CDHR5 and USH1C. MyTH4 domains are found at residues 1644-1793 (YSCE…EAAE) and 1790-1896 (EAAE…KLWL). Phosphoserine is present on S1645. The 304-residue stretch at 1799 to 2102 (ICHKIYFPND…SYVQQLLSAM (304 aa)) folds into the FERM 2 domain.

This sequence belongs to the TRAFAC class myosin-kinesin ATPase superfamily. Myosin family. In terms of assembly, part of the IMAC/intermicrovillar adhesion complex/intermicrovillar tip-link complex composed of ANKS4B, MYO7B, USH1C, CDHR2 and CDHR5. Interacts with CDHR2. Interacts with CDHR5. Interacts with USH1C. Interacts with ANKS4B; requires initial interaction with USH1C. Interacts with CALML4; the interaction mediates the association of CALML4 with the IMAC/intermicrovillar adhesion complex.

The protein resides in the cytoplasm. The protein localises to the cytoskeleton. It localises to the cell projection. Its subcellular location is the microvillus. Its function is as follows. Myosins are actin-based motor molecules with ATPase activity. Their highly divergent tails are presumed to bind to membranous compartments, which would be moved relative to actin filaments. As part of the intermicrovillar adhesion complex/IMAC plays a role in epithelial brush border differentiation, controlling microvilli organization and length. May link the complex to the actin core bundle of microvilli. This chain is Unconventional myosin-VIIb, found in Homo sapiens (Human).